Here is a 1416-residue protein sequence, read N- to C-terminus: Tiny macrocysts protein B (1416 aa).

Transmembrane regions (helical) follow at residues 47–67 (ILTILSMLIEFCQLSSFGFKH), 93–113 (FGYLGFTILFWIAVGLLILGF), 140–160 (FVSFSVAVLFIPIISLLLIGL), 185–205 (ANLPIAVISIILIVVFSIVAF), 231–251 (VTVLFAKFVFAFFNSLVDFVP), 253–273 (LTSITFFVFMVILTFGSIIVL), 285–305 (SGFYTVVLWVSFMTLVTMGIN), and 315–335 (ITIVGVFFAFPIGFFSNMFYF). The segment covering 356-372 (LKDANKKGKRNSVEKES) has biased composition (basic and acidic residues). 2 disordered regions span residues 356–377 (LKDANKKGKRNSVEKESSPTSK) and 662–691 (IEKSGSKSGSSKSKDDSSESSSSSKGRRGK). 2 helical membrane-spanning segments follow: residues 706–726 (WLMIGTTCCCIIFLIVVLVVF) and 953–973 (AILYTWCGIFAVLFLICAVLF). Disordered regions lie at residues 1018-1103 (RDNL…RPLM) and 1119-1144 (NVRLQAKDEEITNGGGERKGSDATRT). Residues 1024 to 1039 (TTDDDGRDDHLGEDDN) are compositionally biased toward acidic residues. Low complexity-rich tracts occupy residues 1048-1062 (NNNNNNNNNNNNNNN) and 1083-1094 (SSSGSNVLNTSS). The span at 1123–1144 (QAKDEEITNGGGERKGSDATRT) shows a compositional bias: basic and acidic residues. A run of 3 helical transmembrane segments spans residues 1179 to 1199 (ILATFLLFGFITMGIWVTFTV), 1325 to 1345 (WFLALIDYIFIGLDTATFTYF), and 1358 to 1378 (VLTAILSVSCVILLVVHVVLF).

It is found in the membrane. Regulator of the cAMP signaling pathway specific to sexual development. Controls the levels of external cAMP by regulating the expression of phosphodiesterase pdsA and its inhibitor pdiA. In Dictyostelium discoideum (Social amoeba), this protein is Tiny macrocysts protein B (tmcB).